The sequence spans 198 residues: Recombination protein RecR (198 aa).

Residues 57–72 (CTICGHITDTDPCYIC) form a C4-type zinc finger. The Toprim domain occupies 80–175 (TTICVVQDPK…KVTRIAHGLP (96 aa)).

Belongs to the RecR family.

In terms of biological role, may play a role in DNA repair. It seems to be involved in an RecBC-independent recombinational process of DNA repair. It may act with RecF and RecO. The protein is Recombination protein RecR of Geobacillus kaustophilus (strain HTA426).